The sequence spans 415 residues: Cell division control protein 11 (415 aa).

Serine 2 is subject to N-acetylserine. The residue at position 2 (serine 2) is a Phosphoserine. Positions 12–19 (RKRKHLKR) match the Basic motif motif. Residues 19-298 (RGITFTVMIV…ERYRTEALSG (280 aa)) enclose the Septin-type G domain. A G1 motif region spans residues 29–36 (GQSGSGRS). GTP is bound by residues 29–36 (GQSGSGRS), glycine 92, 172–180 (KSDSLTRDE), glycine 230, and arginine 247. Residues 89 to 92 (DTPG) are G3 motif. Residues 171 to 174 (SKSD) form a G4 motif region. The residue at position 305 (serine 305) is a Phosphoserine. The tract at residues 307 to 360 (RPNLTKLNGSSSSSTTTRRNTNPFKQSNNINNDVLNPASDMHGQSTGENNETYM) is disordered. The segment covering 316–328 (SSSSSTTTRRNTN) has biased composition (low complexity). Threonine 327 is subject to Phosphothreonine. 2 stretches are compositionally biased toward polar residues: residues 329–340 (PFKQSNNINNDV) and 348–359 (HGQSTGENNETY). Positions 354 to 414 (ENNETYMTRE…LEKEAKIKQE (61 aa)) form a coiled coil. A Glycyl lysine isopeptide (Lys-Gly) (interchain with G-Cter in SUMO) cross-link involves residue lysine 412.

This sequence belongs to the TRAFAC class TrmE-Era-EngA-EngB-Septin-like GTPase superfamily. Septin GTPase family. As to quaternary structure, component of the septin complex which consists of CDC3, CDC10, CDC11, CDC12 and probably SHS1 and rearranges to a cortical collar of highly ordered filaments at the mother-bud-neck. A complex formed by CDC3, CDC10, CDC11 and CDC12 is capable of forming long filaments in vitro and the components seem to be present in a 2:2:2:2 arrangement in vivo. The filaments are proposed to be formed by the end-to-end polymerization of CDC3-CDC12-CDC11 complexes with CDC10 serving as a bridge to bundle the polymers into paired filaments. Component of the GIN4 complex composed of at least BNI5, CDC3, CDC10, CDC11, CDC12, GIN4, NAP1 and SHS1. Self-associates. Interacts with BEM4, KCC4, SPR28 and SYP1. Interacts with BNI5. Sumoylated during mitosis on the mother cell side of the bud neck. Sumoylation probably plays a central role in regulating septin ring disassembly during the cell cycle.

Its subcellular location is the membrane. It is found in the bud neck. Septins are GTPases involved in cytokinesis that assemble early in the cell cycle as a patch at the incipient bud site and form a ring approximate 15 minutes before bud emergence, which transforms into an hour-glass shaped collar of cortical filaments that spans both sides of the mother-bud neck. This collar persists until just before cytokinesis, when it splits into two rings that occupy opposite sides of the neck. The septins at the bud neck serve as a structural scaffold that recruits different components involved in diverse processes at specific stages during the cell cycle. Many proteins bind asymmetrically to the septin collar. The septin assembly is regulated by protein kinases GIN4 and/or CLA4. May act by recruiting MYO1 and HOF1, a protein involved in septation, to the site of cleavage. Septins are also involved in cell morphogenesis, bud site selection, chitin deposition, cell cycle regulation, cell compartmentalization and spore wall formation. CDCd11 with SHS1 11 are involved in the recruitment of BNI5 and thereby ensure efficient localization at the bud neck of MYO1, the type II myosin of the actomyosin contractile ring. This is Cell division control protein 11 from Saccharomyces cerevisiae (strain ATCC 204508 / S288c) (Baker's yeast).